The sequence spans 464 residues: Sugar transporter ERD6-like 1 (464 aa).

Transmembrane regions (helical) follow at residues 23 to 43, 72 to 92, 95 to 115, 125 to 145, 156 to 176, 180 to 200, 263 to 283, 298 to 318, 326 to 346, 359 to 379, 399 to 419, and 424 to 444; these read ITCG…VYGC, VMTL…AVIG, QTMW…AFAH, GFLG…IAEI, FSNQ…GNFF, TLAL…FFIP, LIIG…AISA, IGTS…MFAV, LLMS…LSYY, PILI…LGGL, LVTV…NFMM, and FGTY…VWTL.

It belongs to the major facilitator superfamily. Sugar transporter (TC 2.A.1.1) family.

The protein localises to the membrane. In terms of biological role, sugar transporter. The chain is Sugar transporter ERD6-like 1 (SUGTL4) from Arabidopsis thaliana (Mouse-ear cress).